Here is a 168-residue protein sequence, read N- to C-terminus: 6,7-dimethyl-8-ribityllumazine synthase (168 aa).

Residues Phe-24, 58-60 (ALE), and 82-84 (AVI) each bind 5-amino-6-(D-ribitylamino)uracil. Residue 87–88 (ET) coordinates (2S)-2-hydroxy-3-oxobutyl phosphate. The Proton donor role is filled by His-90. Asn-115 contributes to the 5-amino-6-(D-ribitylamino)uracil binding site. Residue Arg-129 coordinates (2S)-2-hydroxy-3-oxobutyl phosphate.

Belongs to the DMRL synthase family.

It catalyses the reaction (2S)-2-hydroxy-3-oxobutyl phosphate + 5-amino-6-(D-ribitylamino)uracil = 6,7-dimethyl-8-(1-D-ribityl)lumazine + phosphate + 2 H2O + H(+). It participates in cofactor biosynthesis; riboflavin biosynthesis; riboflavin from 2-hydroxy-3-oxobutyl phosphate and 5-amino-6-(D-ribitylamino)uracil: step 1/2. Catalyzes the formation of 6,7-dimethyl-8-ribityllumazine by condensation of 5-amino-6-(D-ribitylamino)uracil with 3,4-dihydroxy-2-butanone 4-phosphate. This is the penultimate step in the biosynthesis of riboflavin. The sequence is that of 6,7-dimethyl-8-ribityllumazine synthase from Paraburkholderia phytofirmans (strain DSM 17436 / LMG 22146 / PsJN) (Burkholderia phytofirmans).